Consider the following 546-residue polypeptide: Chaperonin GroEL 5 (546 aa).

Residues Thr30–Pro33, Lys51, Asp87–Thr91, Gly415, and Asp495 each bind ATP.

Belongs to the chaperonin (HSP60) family. As to quaternary structure, forms a cylinder of 14 subunits composed of two heptameric rings stacked back-to-back. Interacts with the co-chaperonin GroES.

Its subcellular location is the cytoplasm. The enzyme catalyses ATP + H2O + a folded polypeptide = ADP + phosphate + an unfolded polypeptide.. Functionally, together with its co-chaperonin GroES, plays an essential role in assisting protein folding. The GroEL-GroES system forms a nano-cage that allows encapsulation of the non-native substrate proteins and provides a physical environment optimized to promote and accelerate protein folding. The sequence is that of Chaperonin GroEL 5 from Paraburkholderia xenovorans (strain LB400).